Here is a 78-residue protein sequence, read N- to C-terminus: Small ribosomal subunit protein bS18c (78 aa).

It belongs to the bacterial ribosomal protein bS18 family. In terms of assembly, part of the 30S ribosomal subunit.

The protein resides in the plastid. It localises to the chloroplast. The sequence is that of Small ribosomal subunit protein bS18c from Oltmannsiellopsis viridis (Marine flagellate).